The chain runs to 108 residues: Acid stress chaperone HdeB (108 aa).

The signal sequence occupies residues Met-1 to Ala-29. Lys-93 is modified (N6-acetyllysine).

It belongs to the HdeB family.

It localises to the periplasm. Required for optimal acid stress protection, which is important for survival of enteric bacteria in the acidic environment of the host stomach. Exhibits a chaperone-like activity at acidic pH by preventing the aggregation of many different periplasmic proteins. This chain is Acid stress chaperone HdeB, found in Escherichia coli O6:H1 (strain CFT073 / ATCC 700928 / UPEC).